The primary structure comprises 472 residues: NADH-quinone oxidoreductase subunit N (472 aa).

14 helical membrane passes run 11 to 31, 43 to 63, 67 to 87, 103 to 123, 125 to 145, 159 to 179, 200 to 220, 234 to 254, 265 to 285, 293 to 313, 318 to 338, 362 to 384, 401 to 421, and 446 to 466; these read AELS…FLPA, ILLT…LFGG, STPM…LVFL, GEFY…VSAG, FLLF…LVAF, FILS…MIYG, VLAL…VPFH, VSAY…MIIL, WSEI…LFAI, FMAF…LAGT, ASLV…FGVI, PKLT…FAGF, LIVF…LLIV, and LLVC…YQLL.

It belongs to the complex I subunit 2 family. NDH-1 is composed of 14 different subunits. Subunits NuoA, H, J, K, L, M, N constitute the membrane sector of the complex.

The protein resides in the cell inner membrane. The enzyme catalyses a quinone + NADH + 5 H(+)(in) = a quinol + NAD(+) + 4 H(+)(out). Its function is as follows. NDH-1 shuttles electrons from NADH, via FMN and iron-sulfur (Fe-S) centers, to quinones in the respiratory chain. The immediate electron acceptor for the enzyme in this species is believed to be a menaquinone. Couples the redox reaction to proton translocation (for every two electrons transferred, four hydrogen ions are translocated across the cytoplasmic membrane), and thus conserves the redox energy in a proton gradient. In Phocaeicola vulgatus (strain ATCC 8482 / DSM 1447 / JCM 5826 / CCUG 4940 / NBRC 14291 / NCTC 11154) (Bacteroides vulgatus), this protein is NADH-quinone oxidoreductase subunit N.